Consider the following 519-residue polypeptide: ATP synthase subunit alpha 2 (519 aa).

179 to 186 (GDRQTGKT) contributes to the ATP binding site.

The protein belongs to the ATPase alpha/beta chains family. In terms of assembly, F-type ATPases have 2 components, CF(1) - the catalytic core - and CF(0) - the membrane proton channel. CF(1) has five subunits: alpha(3), beta(3), gamma(1), delta(1), epsilon(1). CF(0) has three main subunits: a(1), b(2) and c(9-12). The alpha and beta chains form an alternating ring which encloses part of the gamma chain. CF(1) is attached to CF(0) by a central stalk formed by the gamma and epsilon chains, while a peripheral stalk is formed by the delta and b chains.

The protein resides in the cell inner membrane. It catalyses the reaction ATP + H2O + 4 H(+)(in) = ADP + phosphate + 5 H(+)(out). Functionally, produces ATP from ADP in the presence of a proton gradient across the membrane. The alpha chain is a regulatory subunit. This chain is ATP synthase subunit alpha 2, found in Syntrophus aciditrophicus (strain SB).